We begin with the raw amino-acid sequence, 95 residues long: MAINSKVVAQVAHLARLKVDPQDSNALSDRLNDILAMVDQLQQADVDGVAPMAHPLDVTQPLRDDVVTEPNIRDKALAIAPAVENGCFLVPRVIE.

Belongs to the GatC family. In terms of assembly, heterotrimer of A, B and C subunits.

The catalysed reaction is L-glutamyl-tRNA(Gln) + L-glutamine + ATP + H2O = L-glutaminyl-tRNA(Gln) + L-glutamate + ADP + phosphate + H(+). It catalyses the reaction L-aspartyl-tRNA(Asn) + L-glutamine + ATP + H2O = L-asparaginyl-tRNA(Asn) + L-glutamate + ADP + phosphate + 2 H(+). Allows the formation of correctly charged Asn-tRNA(Asn) or Gln-tRNA(Gln) through the transamidation of misacylated Asp-tRNA(Asn) or Glu-tRNA(Gln) in organisms which lack either or both of asparaginyl-tRNA or glutaminyl-tRNA synthetases. The reaction takes place in the presence of glutamine and ATP through an activated phospho-Asp-tRNA(Asn) or phospho-Glu-tRNA(Gln). This Alcanivorax borkumensis (strain ATCC 700651 / DSM 11573 / NCIMB 13689 / SK2) protein is Aspartyl/glutamyl-tRNA(Asn/Gln) amidotransferase subunit C.